An 82-amino-acid polypeptide reads, in one-letter code: NAD(P)H-quinone oxidoreductase subunit O (82 aa).

This sequence belongs to the complex I NdhO subunit family. In terms of assembly, NDH-1 can be composed of about 15 different subunits; different subcomplexes with different compositions have been identified which probably have different functions.

The protein localises to the cellular thylakoid membrane. It carries out the reaction a plastoquinone + NADH + (n+1) H(+)(in) = a plastoquinol + NAD(+) + n H(+)(out). The catalysed reaction is a plastoquinone + NADPH + (n+1) H(+)(in) = a plastoquinol + NADP(+) + n H(+)(out). Its function is as follows. NDH-1 shuttles electrons from an unknown electron donor, via FMN and iron-sulfur (Fe-S) centers, to quinones in the respiratory and/or the photosynthetic chain. The immediate electron acceptor for the enzyme in this species is believed to be plastoquinone. Couples the redox reaction to proton translocation, and thus conserves the redox energy in a proton gradient. Cyanobacterial NDH-1 also plays a role in inorganic carbon-concentration. In Prochlorococcus marinus (strain MIT 9211), this protein is NAD(P)H-quinone oxidoreductase subunit O.